We begin with the raw amino-acid sequence, 249 residues long: Superoxide dismutase 1 copper chaperone (249 aa).

In terms of domain architecture, HMA spans 6-69; it reads TYEATYAIPM…TLRNCGKDAI (64 aa). A Zn(2+)-binding site is contributed by histidine 16. Cu cation is bound by residues cysteine 17 and cysteine 20. Cysteine 27 and cysteine 64 are oxidised to a cystine. The Cu cation site is built by cysteine 229 and cysteine 231.

Belongs to the CCS1 family. Homodimer, and heterodimer with apo-SOD1. Zinc-binding at His-16 of CCS1 and 'Glu-43' of apo-SOD1 is required for this heterodimerization. The cofactor is Cu(2+).

It is found in the cytoplasm. Its subcellular location is the mitochondrion intermembrane space. In terms of biological role, copper chaperone for apo superoxide dismutase 1 (SOD1). Binds copper ions and delivers them specifically to apo-SOD1. In Saccharomyces cerevisiae (strain ATCC 204508 / S288c) (Baker's yeast), this protein is Superoxide dismutase 1 copper chaperone (CCS1).